The chain runs to 258 residues: Short-chain dehydrogenase reductase 3c (258 aa).

NAD(+) is bound at residue 12–36 (IITGGASGIGADAARLFTDHGAKVV). Residue serine 144 coordinates substrate. Tyrosine 156 serves as the catalytic Proton acceptor.

It belongs to the short-chain dehydrogenases/reductases (SDR) family.

The sequence is that of Short-chain dehydrogenase reductase 3c (SDR3c) from Arabidopsis thaliana (Mouse-ear cress).